A 242-amino-acid chain; its full sequence is Small ribosomal subunit protein uS2 (242 aa).

Belongs to the universal ribosomal protein uS2 family.

This is Small ribosomal subunit protein uS2 from Shewanella amazonensis (strain ATCC BAA-1098 / SB2B).